Here is a 570-residue protein sequence, read N- to C-terminus: Proline--tRNA ligase (570 aa).

Belongs to the class-II aminoacyl-tRNA synthetase family. ProS type 1 subfamily. In terms of assembly, homodimer.

The protein resides in the cytoplasm. It catalyses the reaction tRNA(Pro) + L-proline + ATP = L-prolyl-tRNA(Pro) + AMP + diphosphate. In terms of biological role, catalyzes the attachment of proline to tRNA(Pro) in a two-step reaction: proline is first activated by ATP to form Pro-AMP and then transferred to the acceptor end of tRNA(Pro). As ProRS can inadvertently accommodate and process non-cognate amino acids such as alanine and cysteine, to avoid such errors it has two additional distinct editing activities against alanine. One activity is designated as 'pretransfer' editing and involves the tRNA(Pro)-independent hydrolysis of activated Ala-AMP. The other activity is designated 'posttransfer' editing and involves deacylation of mischarged Ala-tRNA(Pro). The misacylated Cys-tRNA(Pro) is not edited by ProRS. This Clostridium botulinum (strain Eklund 17B / Type B) protein is Proline--tRNA ligase.